A 250-amino-acid chain; its full sequence is MTNDSARMRKVLTFTRRSNRMTACQKRDYQHLASRWIIPYQNTVFDYAAVFCSPAAPSAPAGAFPAPQGKTDAVAPACAPAPLVVEIGFGMGSATAAIAARNPHLSYLGIEVYRAGIGRLLRKIEAERLHNLRIIEHDALDVLRTMIAPQTLAGLHIFFPDPWPKTRHHKRRLLYRPRTDLLARALAPGGYLYAVTDWAEYARRAQEELARTPSLTWAPQGARPWRPATEFERKAQTQGRAIHELFFIKA.

Residues glutamate 86, glutamate 111, aspartate 138, and aspartate 161 each coordinate S-adenosyl-L-methionine. Aspartate 161 is an active-site residue. Residues lysine 165, aspartate 197, and 229-232 (TEFE) each bind substrate.

Belongs to the class I-like SAM-binding methyltransferase superfamily. TrmB family.

It catalyses the reaction guanosine(46) in tRNA + S-adenosyl-L-methionine = N(7)-methylguanosine(46) in tRNA + S-adenosyl-L-homocysteine. The protein operates within tRNA modification; N(7)-methylguanine-tRNA biosynthesis. Its function is as follows. Catalyzes the formation of N(7)-methylguanine at position 46 (m7G46) in tRNA. The polypeptide is tRNA (guanine-N(7)-)-methyltransferase (Treponema pallidum (strain Nichols)).